A 510-amino-acid polypeptide reads, in one-letter code: ATP synthase subunit alpha (510 aa).

170 to 177 (GDRQTGKT) provides a ligand contact to ATP.

It belongs to the ATPase alpha/beta chains family. In terms of assembly, F-type ATPases have 2 components, CF(1) - the catalytic core - and CF(0) - the membrane proton channel. CF(1) has five subunits: alpha(3), beta(3), gamma(1), delta(1), epsilon(1). CF(0) has three main subunits: a(1), b(2) and c(9-12). The alpha and beta chains form an alternating ring which encloses part of the gamma chain. CF(1) is attached to CF(0) by a central stalk formed by the gamma and epsilon chains, while a peripheral stalk is formed by the delta and b chains.

It localises to the cell inner membrane. The catalysed reaction is ATP + H2O + 4 H(+)(in) = ADP + phosphate + 5 H(+)(out). In terms of biological role, produces ATP from ADP in the presence of a proton gradient across the membrane. The alpha chain is a regulatory subunit. The polypeptide is ATP synthase subunit alpha (Caulobacter sp. (strain K31)).